A 180-amino-acid chain; its full sequence is Fanconi anemia core complex-associated protein 20 (180 aa).

A compositionally biased stretch (basic residues) spans 1-17; it reads MEAARRPRLGLSRRRPR. Disordered regions lie at residues 1 to 28 and 106 to 135; these read MEAA…GRPW and GAGG…VEQQ. A phosphoserine mark is found at Ser113 and Ser137. The segment at 144 to 180 adopts a UBZ2-type zinc-finger fold; it reads LRSCPMCQKEFAPRLTQLDVDSHLAQCLAESTEDVTW. Zn(2+)-binding residues include Cys147, Cys150, His166, and Cys170.

In terms of assembly, component of the Fanconi anemia (FA) complex. Interacts with FANCA; interaction is direct. Interacts with REV1. Reported to bind monoubiquitinated REV1; however it binds better to non-ubiquitinated REV1.

It localises to the nucleus. Its subcellular location is the chromosome. Its function is as follows. Component of the Fanconi anemia (FA) complex required to recruit the FA complex to DNA interstrand cross-links (ICLs) and promote ICLs repair. Following DNA damage recognizes and binds 'Lys-63'-linked ubiquitin generated by RNF8 at ICLs and recruits other components of the FA complex. Promotes translesion synthesis via interaction with REV1. This Homo sapiens (Human) protein is Fanconi anemia core complex-associated protein 20.